Consider the following 370-residue polypeptide: Small ribosomal subunit biogenesis GTPase RsgA (370 aa).

Residues 97 to 255 (QTQLDRPPIA…LADTPGFNQP (159 aa)) enclose the CP-type G domain. Residues 146–149 (NKSD) and 197–205 (GPSGVGKSS) contribute to the GTP site. Residues Cys280, Cys285, His287, and Cys293 each contribute to the Zn(2+) site. Positions 328–370 (TLKLKTKGKGQSQYEPKLESKKYRRTSRRTQVQGLQDLYQEEE) are disordered.

It belongs to the TRAFAC class YlqF/YawG GTPase family. RsgA subfamily. In terms of assembly, monomer. Associates with 30S ribosomal subunit, binds 16S rRNA. Zn(2+) serves as cofactor.

Its subcellular location is the cytoplasm. One of several proteins that assist in the late maturation steps of the functional core of the 30S ribosomal subunit. Helps release RbfA from mature subunits. May play a role in the assembly of ribosomal proteins into the subunit. Circularly permuted GTPase that catalyzes slow GTP hydrolysis, GTPase activity is stimulated by the 30S ribosomal subunit. In Trichormus variabilis (strain ATCC 29413 / PCC 7937) (Anabaena variabilis), this protein is Small ribosomal subunit biogenesis GTPase RsgA.